Consider the following 202-residue polypeptide: NADH-quinone oxidoreductase subunit C (202 aa).

This sequence belongs to the complex I 30 kDa subunit family. NDH-1 is composed of 14 different subunits. Subunits NuoB, C, D, E, F, and G constitute the peripheral sector of the complex.

Its subcellular location is the cell inner membrane. It carries out the reaction a quinone + NADH + 5 H(+)(in) = a quinol + NAD(+) + 4 H(+)(out). In terms of biological role, NDH-1 shuttles electrons from NADH, via FMN and iron-sulfur (Fe-S) centers, to quinones in the respiratory chain. The immediate electron acceptor for the enzyme in this species is believed to be ubiquinone. Couples the redox reaction to proton translocation (for every two electrons transferred, four hydrogen ions are translocated across the cytoplasmic membrane), and thus conserves the redox energy in a proton gradient. The chain is NADH-quinone oxidoreductase subunit C from Brucella canis (strain ATCC 23365 / NCTC 10854 / RM-666).